The primary structure comprises 130 residues: uncharacterized protein (130 aa).

Positions 1 to 104 are disordered; the sequence is MRPGSSPRAP…RGRWGLRGGP (104 aa). The segment covering 88 to 97 has biased composition (low complexity); it reads RRQPGPQRGR.

This is an uncharacterized protein from Homo sapiens (Human).